The following is a 205-amino-acid chain: LIM domain-containing protein PLIM2b (205 aa).

2 LIM zinc-binding domains span residues 8–68 and 102–162; these read DKCN…LFKE and DKCA…LFME. Residues 177–205 form a disordered region; that stretch reads RTASGNTLPPEPTEDVAVEAKEENGVSES. A compositionally biased stretch (basic and acidic residues) spans 194 to 205; that stretch reads VEAKEENGVSES.

In terms of assembly, interacts with F-actin. Predominantly expressed in flowers and in pollen grains. Detected in vasculature and roots.

Its subcellular location is the cytoplasm. It localises to the cytoskeleton. Its function is as follows. Binds to actin filaments and promotes cross-linking into thick bundles. Has an actin-stabilizing activity. The actin regulatory activities are inhibited by pH &gt; 6.8 but are [Ca(2+)] independent. This is LIM domain-containing protein PLIM2b from Arabidopsis thaliana (Mouse-ear cress).